We begin with the raw amino-acid sequence, 385 residues long: ADP,ATP carrier protein 2, mitochondrial (385 aa).

Residues 1 to 74 constitute a mitochondrion transit peptide; sequence MVEQTQHPTI…ATTTSPVFVQ (74 aa). Solcar repeat units follow at residues 82–175, 187–280, and 288–374; these read TNFA…FKRL, KWFA…VKPV, and DSFF…LQLI. 5 helical membrane-spanning segments follow: residues 84 to 111, 152 to 176, 185 to 205, 256 to 277, and 291 to 311; these read FAID…VKLL, TANV…KRLF, YWKW…SSLL, FNIS…YDSV, and FASF…SYPI. ADP contacts are provided by Arg157 and Lys169. Residue Arg315 coordinates ADP. An important for transport activity region spans residues 315-320; sequence RRRMMM. The short motif at 315–320 is the Nucleotide carrier signature motif element; sequence RRRMMM. A helical transmembrane segment spans residues 351-371; it reads AGANILRAVAGAGVLAGYDKL.

It belongs to the mitochondrial carrier (TC 2.A.29) family. Monomer.

It is found in the mitochondrion inner membrane. The enzyme catalyses ADP(in) + ATP(out) = ADP(out) + ATP(in). The matrix-open state (m-state) is inhibited by the membrane-permeable bongkrekic acid (BKA). The cytoplasmic-open state (c-state) is inhibited by the membrane-impermeable toxic inhibitor carboxyatractyloside (CATR). Its function is as follows. ADP:ATP antiporter that mediates import of ADP into the mitochondrial matrix for ATP synthesis, and export of ATP out to fuel the cell. Cycles between the cytoplasmic-open state (c-state) and the matrix-open state (m-state): operates by the alternating access mechanism with a single substrate-binding site intermittently exposed to either the cytosolic (c-state) or matrix (m-state) side of the inner mitochondrial membrane. This is ADP,ATP carrier protein 2, mitochondrial (AAC2) from Arabidopsis thaliana (Mouse-ear cress).